We begin with the raw amino-acid sequence, 518 residues long: Bifunctional methyltransferase (518 aa).

The segment at 1–300 is hemK; sequence MQYSIKQILN…SHNRVIEISP (300 aa). Residues 1-302 form an RF MTase region; that stretch reads MQYSIKQILN…NRVIEISPIN (302 aa). Residues 140 to 144, Asp163, Trp192, Asn207, Glu347, Glu372, Asn399, and Asp421 contribute to the S-adenosyl-L-methionine site; that span reads GTGSG. 207-210 contacts substrate; that stretch reads NPPY. A tRNA (guanine-N(7)-)-methyltransferase region spans residues 301-518; that stretch reads INLNRSYARR…MILQHALTGH (218 aa). A tRNA MTase region spans residues 305-518; it reads RSYARRIGKS…MILQHALTGH (214 aa). Residue Asp421 is part of the active site. The substrate site is built by Lys425 and Asp457.

It in the C-terminal section; belongs to the class I-like SAM-binding methyltransferase superfamily. TrmB family. This sequence in the N-terminal section; belongs to the protein N5-glutamine methyltransferase family. PrmC subfamily.

It carries out the reaction L-glutaminyl-[peptide chain release factor] + S-adenosyl-L-methionine = N(5)-methyl-L-glutaminyl-[peptide chain release factor] + S-adenosyl-L-homocysteine + H(+). The enzyme catalyses guanosine(46) in tRNA + S-adenosyl-L-methionine = N(7)-methylguanosine(46) in tRNA + S-adenosyl-L-homocysteine. Methylates the class 1 translation termination release factors RF1/PrfA and RF2/PrfB on the glutamine residue of the universally conserved GGQ motif. In terms of biological role, catalyzes the formation of N(7)-methylguanine at position 46 (m7G46) in tRNA. This Rickettsia typhi (strain ATCC VR-144 / Wilmington) protein is Bifunctional methyltransferase (prmC/trmB).